Reading from the N-terminus, the 228-residue chain is Homeobox-leucine zipper protein ATHB-53 (228 aa).

The segment at 36–62 (DGGEESKPVKRRRKRRSKGSSATNEED) is disordered. Residues 44–53 (VKRRRKRRSK) show a composition bias toward basic residues. Positions 68–127 (GMLRKRKLTDEQVNMLEYSFGNEHKLESGRKEKIAGELGLDPRQVAVWFQNRRARWKNKK) form a DNA-binding region, homeobox. The tract at residues 128–156 (LEEEYAKLKNHHDNVVLGQCQLESQILKL) is leucine-zipper.

This sequence belongs to the HD-ZIP homeobox family. Class I subfamily. As to expression, expressed in root meristem, late flowers and siliques.

It is found in the nucleus. Its function is as follows. Probable transcription factor that may play a regulatory role in auxin/cytokinin signaling during root development. The sequence is that of Homeobox-leucine zipper protein ATHB-53 (ATHB-53) from Arabidopsis thaliana (Mouse-ear cress).